Reading from the N-terminus, the 624-residue chain is PTS system mannitol-specific EIICBA component (624 aa).

In terms of domain architecture, PTS EIIC type-2 spans 13-336 (FGRFLSNMVM…SFVIASFFLK (324 aa)). 6 helical membrane passes run 25–46 (IGAF…WLPN), 51–71 (KLVG…SGGK), 135–156 (SSGI…PAVK), 166–186 (VDIL…EPAK), 274–293 (VIAG…AGLV), and 314–335 (VGVL…SFFL). One can recognise a PTS EIIB type-2 domain in the interval 372-463 (QKIFVACDAG…LVQDLSNTKV (92 aa)). The Phosphocysteine intermediate; for EIIB activity role is filled by Cys-378. Cys-378 carries the post-translational modification Phosphocysteine; by EIIA. One can recognise a PTS EIIA type-2 domain in the interval 482 to 624 (FVLTEKQVFL…VEKVLALLKA (143 aa)). The active-site Tele-phosphohistidine intermediate; for EIIA activity is His-542. His-542 carries the post-translational modification Phosphohistidine; by HPr.

As to quaternary structure, homodimer. An intramolecular phosphotransfer takes places between His-542 and Cys-378.

It is found in the cell inner membrane. The enzyme catalyses D-mannitol(out) + N(pros)-phospho-L-histidyl-[protein] = D-mannitol 1-phosphate(in) + L-histidyl-[protein]. The phosphoenolpyruvate-dependent sugar phosphotransferase system (sugar PTS), a major carbohydrate active transport system, catalyzes the phosphorylation of incoming sugar substrates concomitantly with their translocation across the cell membrane. This system is involved in D-mannitol transport. The protein is PTS system mannitol-specific EIICBA component (mtlA) of Pasteurella multocida (strain Pm70).